A 582-amino-acid polypeptide reads, in one-letter code: BTB/POZ domain and ankyrin repeat-containing protein NPR1 (582 aa).

Residues 1-18 are compositionally biased toward polar residues; it reads MEPPTSHVTNAFSDSDSA. The tract at residues 1 to 25 is disordered; sequence MEPPTSHVTNAFSDSDSASVEEGGA. One can recognise a BTB domain in the interval 55–140; the sequence is ADARIAVPGG…VLDYLYSGRV (86 aa). The C2HC NPR-type zinc finger occupies 147-161; the sequence is ACLCVDEDCAHVGCH. Residues Cys150, Cys155, His157, and Cys160 each contribute to the Zn(2+) site. ANK repeat units follow at residues 229 to 258, 269 to 299, 301 to 328, and 332 to 361; these read RSNLDMITLEKSLPPDVIKQIIDARLSLGL, KHVRRIHRALDSDDVELVRMLLTEGQTNLDD, FALHYAVEHCDSKITTELLDLALADVNH, and RGYTVLHIAARRREPKIIVSLLTKGARPAD. A salicylic acid-binding core (SBC) region spans residues 391 to 526; the sequence is PSPKDRLCIE…VLDKIMDDET (136 aa). Arg436 is a salicylate binding site. Residues 551 to 582 form a disordered region; sequence QKAFHEDKEENDRSGLSSSSSSTSIGAIRPRR. Residues 553–563 are compositionally biased toward basic and acidic residues; that stretch reads AFHEDKEENDR. Over residues 564-574 the composition is skewed to low complexity; sequence SGLSSSSSSTS.

This sequence belongs to the plant 'ANKYRIN-BTB/POZ' family. 'NPR1-like' subfamily. As to quaternary structure, oligomer in an uninduced state; disulfide-linked. Forms activated monomer upon changes in cellular redox potential. Interacts with TGA2.1, TGA2.2, TGA2.3, LG2, TGAL1 and TGAL4. Interacts with NRR, RH1, RH2 and RH3.

It localises to the cytoplasm. Its subcellular location is the nucleus. The protein localises to the nuclear body. It functions in the pathway protein modification; protein ubiquitination. Its function is as follows. Salicylic acid (SA)-binding substrate-specific adapter of an E3 ubiquitin-protein ligase complex (CUL3-RBX1-BTB) which mediates the ubiquitination and subsequent proteasomal degradation of target proteins. Transcription cofactor that represses gene expression in the absence of salicylic acid (SA), when attached to negative cis-elements (W-box) with WRKY transcription factors, but stimulates gene expression upon activation by SA, when sumoylated and attached to positive cis-elements (as-1) with TGA transcription factors, thus confering immunity through a series of gene regulations ending in a significant increase in antimicrobial and defense genes expression. Key positive factor of disease resistance. Plays an essential role in benzothiadiazole (BTH)-induced resistance to the blast fungus disease caused by Magnaporthe oryzae. Involved in defense response against the bacterial blight disease caused by Xanthomonas oryzae pv. oryzae (Xoo). Over-expression of NPR1/NH1 confers disease resistance to Xoo, but also enhances herbivore susceptibility. Functions as a transcriptional coactivator of TGA2.1 and LG2 in vitro. Involved in defense response against herbivore. Plants silencing NPR1/NH1 have increased herbivore-induced trypsin proteinase inhibitors and volatiles, which reduces the performance of the striped stem borer (SSB) Chilo suppressalis. In Oryza sativa subsp. japonica (Rice), this protein is BTB/POZ domain and ankyrin repeat-containing protein NPR1.